Reading from the N-terminus, the 466-residue chain is Phytase A (466 aa).

The N-terminal stretch at 1-19 is a signal peptide; that stretch reads MGFLAIVLSVALLFRSTSG. Cys-31 and Cys-40 are disulfide-bonded. The 1D-myo-inositol hexakisphosphate site is built by Tyr-51, Arg-81, His-82, Arg-85, and Thr-88. Cystine bridges form between Cys-71–Cys-414, Cys-215–Cys-465, Cys-264–Cys-282, and Cys-436–Cys-444. The Nucleophile role is filled by His-82. Asn-120 is a glycosylation site (N-linked (GlcNAc...) asparagine). Arg-165 provides a ligand contact to 1D-myo-inositol hexakisphosphate. N-linked (GlcNAc...) asparagine glycans are attached at residues Asn-207 and Asn-230. Lys-301 is a binding site for 1D-myo-inositol hexakisphosphate. Residues Asn-339 and Asn-352 are each glycosylated (N-linked (GlcNAc...) asparagine). 1D-myo-inositol hexakisphosphate-binding residues include His-361 and Asp-362. N-linked (GlcNAc...) asparagine glycosylation occurs at Asn-376.

The protein belongs to the histidine acid phosphatase family. As to quaternary structure, monomer.

Its subcellular location is the secreted. The catalysed reaction is 1D-myo-inositol hexakisphosphate + H2O = 1D-myo-inositol 1,2,4,5,6-pentakisphosphate + phosphate. The enzyme catalyses 1D-myo-inositol 1,2,4,5,6-pentakisphosphate + H2O = 1D-myo-inositol 1,2,5,6-tetrakisphosphate + phosphate. It catalyses the reaction 1D-myo-inositol 1,2,5,6-tetrakisphosphate + H2O = 1D-myo-inositol 1,2,6-trisphosphate + phosphate. It carries out the reaction 1D-myo-inositol 1,2,6-trisphosphate + H2O = 1D-myo-inositol 1,2-bisphosphate + phosphate. The catalysed reaction is 1D-myo-inositol 1,2-bisphosphate + H2O = 1D-myo-inositol 2-phosphate + phosphate. Functionally, catalyzes the phosphate monoester hydrolysis of phytic acid (myo-inositol hexakisphosphate), which results in the stepwise formation of myo-inositol pentakis-, tetrakis-, tris-, bis-, and monophosphates, as well as the liberation of inorganic phosphate. Myo-inositol 2-monophosphate is the end product. Has a broad substrate specificity and is also able to dephosphorylate other classic acid phosphatase substrates such as p-nitrophenyl phosphate, phenyl phosphate, fructose 1,6-bisphosphate, glucose 6-phosphate, 3-phosphoglycerate, as well as ADP and ATP. In Aspergillus terreus, this protein is Phytase A.